Consider the following 196-residue polypeptide: ATP-dependent Clp protease proteolytic subunit (196 aa).

Ser101 acts as the Nucleophile in catalysis. The active site involves His126.

It belongs to the peptidase S14 family. As to quaternary structure, component of the chloroplastic Clp protease core complex.

It is found in the plastid. Its subcellular location is the chloroplast stroma. It carries out the reaction Hydrolysis of proteins to small peptides in the presence of ATP and magnesium. alpha-casein is the usual test substrate. In the absence of ATP, only oligopeptides shorter than five residues are hydrolyzed (such as succinyl-Leu-Tyr-|-NHMec, and Leu-Tyr-Leu-|-Tyr-Trp, in which cleavage of the -Tyr-|-Leu- and -Tyr-|-Trp bonds also occurs).. In terms of biological role, cleaves peptides in various proteins in a process that requires ATP hydrolysis. Has a chymotrypsin-like activity. Plays a major role in the degradation of misfolded proteins. The chain is ATP-dependent Clp protease proteolytic subunit from Lepidium virginicum (Virginia pepperweed).